Consider the following 387-residue polypeptide: Succinate--CoA ligase [ADP-forming] subunit beta (387 aa).

The 237-residue stretch at 9-245 folds into the ATP-grasp domain; sequence KDLLESYGLK…KSQENAKELK (237 aa). Residues Lys46, 53-55, Glu100, Tyr103, and Glu108 contribute to the ATP site; that span reads GRG. 2 residues coordinate Mg(2+): Asn200 and Asp214. Substrate is bound by residues Asn265 and 322–324; that span reads GIV.

This sequence belongs to the succinate/malate CoA ligase beta subunit family. Heterotetramer of two alpha and two beta subunits. The cofactor is Mg(2+).

The enzyme catalyses succinate + ATP + CoA = succinyl-CoA + ADP + phosphate. It catalyses the reaction GTP + succinate + CoA = succinyl-CoA + GDP + phosphate. It participates in carbohydrate metabolism; tricarboxylic acid cycle; succinate from succinyl-CoA (ligase route): step 1/1. In terms of biological role, succinyl-CoA synthetase functions in the citric acid cycle (TCA), coupling the hydrolysis of succinyl-CoA to the synthesis of either ATP or GTP and thus represents the only step of substrate-level phosphorylation in the TCA. The beta subunit provides nucleotide specificity of the enzyme and binds the substrate succinate, while the binding sites for coenzyme A and phosphate are found in the alpha subunit. The sequence is that of Succinate--CoA ligase [ADP-forming] subunit beta from Francisella tularensis subsp. tularensis (strain WY96-3418).